Reading from the N-terminus, the 461-residue chain is Polycomb group protein FIE1 (461 aa).

Basic residues predominate over residues 1 to 11; it reads MPPSKARRKRS. Residues 1–56 are disordered; sequence MPPSKARRKRSLRDITATVATGTVANSKPGSSSTNEGKQQDKKKEGPQEPDIPPLP. Residues 18 to 37 are compositionally biased toward polar residues; the sequence is TVATGTVANSKPGSSSTNEG. Basic and acidic residues predominate over residues 38–47; sequence KQQDKKKEGP. WD repeat units lie at residues 143–186, 189–229, 235–275, 301–338, 351–391, and 398–437; these read DKDE…LDKS, GHGG…CILV, GHRH…IYVE, VHSDYVDCTRWLGDFILSKSVKNAVLLWEPKPDKRRPG, PKCS…PVLI, and ECKSPIRQTAVSFDGSTILGAADDGAIWRWDEVDPAASSS. The disordered stretch occupies residues 429 to 461; it reads EVDPAASSSKPDQAAAPAAGVGAGAGADADADA. Residues 432-448 are compositionally biased toward low complexity; the sequence is PAASSSKPDQAAAPAAG.

Belongs to the WD repeat ESC family. In terms of tissue distribution, specifically expressed in kernel starting from 6 days after pollination.

It is found in the nucleus. Functionally, polycomb group (PcG) protein. PcG proteins act by forming multiprotein complexes, which are required to maintain the transcriptionally repressive state of homeotic genes throughout development. PcG proteins are not required to initiate repression, but to maintain it during later stages of development. They probably act via the methylation of histones, rendering chromatin heritably changed in its expressibility. The chain is Polycomb group protein FIE1 (FIE1) from Zea mays (Maize).